Here is a 354-residue protein sequence, read N- to C-terminus: Homeobox protein Nkx-2.4 (354 aa).

Positions 189-248 (RRKRRVLFSQAQVYELERRFKQQKYLSAPEREHLASMIHLTPTQVKIWFQNHRYKMKRQA) form a DNA-binding region, homeobox. Residues 246–329 (RQAKDKAAQQ…PALHGPGGGL (84 aa)) are disordered. Pro residues predominate over residues 263–272 (GPPPPPPPSP).

Belongs to the NK-2 homeobox family.

It is found in the nucleus. In terms of biological role, probable transcription factor. This Homo sapiens (Human) protein is Homeobox protein Nkx-2.4 (NKX2-4).